Here is a 365-residue protein sequence, read N- to C-terminus: Peptide chain release factor 1 (365 aa).

An N5-methylglutamine modification is found at Q236.

It belongs to the prokaryotic/mitochondrial release factor family. Post-translationally, methylated by PrmC. Methylation increases the termination efficiency of RF1.

It is found in the cytoplasm. Its function is as follows. Peptide chain release factor 1 directs the termination of translation in response to the peptide chain termination codons UAG and UAA. The sequence is that of Peptide chain release factor 1 from Latilactobacillus sakei subsp. sakei (strain 23K) (Lactobacillus sakei subsp. sakei).